The primary structure comprises 209 residues: Ribosomal RNA large subunit methyltransferase E (209 aa).

Positions 63, 65, 83, 99, and 124 each coordinate S-adenosyl-L-methionine. The Proton acceptor role is filled by Lys164.

The protein belongs to the class I-like SAM-binding methyltransferase superfamily. RNA methyltransferase RlmE family.

Its subcellular location is the cytoplasm. It carries out the reaction uridine(2552) in 23S rRNA + S-adenosyl-L-methionine = 2'-O-methyluridine(2552) in 23S rRNA + S-adenosyl-L-homocysteine + H(+). Specifically methylates the uridine in position 2552 of 23S rRNA at the 2'-O position of the ribose in the fully assembled 50S ribosomal subunit. The polypeptide is Ribosomal RNA large subunit methyltransferase E (Vibrio vulnificus (strain CMCP6)).